A 226-amino-acid polypeptide reads, in one-letter code: NADH-quinone oxidoreductase subunit C (226 aa).

The segment at 1 to 21 (MTEPTGDQTPEIIGVRRGMFG) is disordered.

Belongs to the complex I 30 kDa subunit family. NDH-1 is composed of 14 different subunits. Subunits NuoB, C, D, E, F, and G constitute the peripheral sector of the complex.

The protein resides in the cell membrane. It catalyses the reaction a quinone + NADH + 5 H(+)(in) = a quinol + NAD(+) + 4 H(+)(out). Its function is as follows. NDH-1 shuttles electrons from NADH, via FMN and iron-sulfur (Fe-S) centers, to quinones in the respiratory chain. The immediate electron acceptor for the enzyme in this species is believed to be a menaquinone. Couples the redox reaction to proton translocation (for every two electrons transferred, four hydrogen ions are translocated across the cytoplasmic membrane), and thus conserves the redox energy in a proton gradient. This chain is NADH-quinone oxidoreductase subunit C, found in Mycolicibacterium gilvum (strain PYR-GCK) (Mycobacterium gilvum (strain PYR-GCK)).